Consider the following 514-residue polypeptide: 2,3-bisphosphoglycerate-independent phosphoglycerate mutase (514 aa).

Residues Asp-14 and Ser-64 each contribute to the Mn(2+) site. The Phosphoserine intermediate role is filled by Ser-64. Substrate-binding positions include His-125, 155–156 (RD), Arg-187, Arg-193, 263–266 (RADR), and Lys-337. Mn(2+) is bound by residues Asp-404, His-408, Asp-445, His-446, and His-463.

This sequence belongs to the BPG-independent phosphoglycerate mutase family. As to quaternary structure, monomer. It depends on Mn(2+) as a cofactor.

The enzyme catalyses (2R)-2-phosphoglycerate = (2R)-3-phosphoglycerate. The protein operates within carbohydrate degradation; glycolysis; pyruvate from D-glyceraldehyde 3-phosphate: step 3/5. Its function is as follows. Catalyzes the interconversion of 2-phosphoglycerate and 3-phosphoglycerate. This chain is 2,3-bisphosphoglycerate-independent phosphoglycerate mutase, found in Hahella chejuensis (strain KCTC 2396).